A 2968-amino-acid polypeptide reads, in one-letter code: Polyketide synthase 37 (2968 aa).

Residues 32–454 (KEPIAIIGIG…GSNSSLFLSS (423 aa)) form the Ketosynthase family 3 (KS3) domain. Catalysis depends on for beta-ketoacyl synthase activity residues C198, H338, and H378. The tract at residues 624 to 950 (FIFSGQGQQW…LSTLSKNSNS (327 aa)) is malonyl-CoA:ACP transacylase (MAT) domain. The For malonyltransferase activity role is filled by S718. Positions 1017-1157 (PPMFISLDRK…GIIKYGTNYL (141 aa)) are N-terminal hotdog fold. Residues 1017–1350 (PPMFISLDRK…FKGINSSSSS (334 aa)) enclose the PKS/mFAS DH domain. The tract at residues 1031–1345 (TPSFEVRLNQ…LTNLEFKGIN (315 aa)) is dehydratase (DH) domain. H1049 serves as the catalytic Proton acceptor; for dehydratase activity. The segment at 1183-1350 (FKSFNSNEFY…FKGINSSSSS (168 aa)) is C-terminal hotdog fold. D1257 serves as the catalytic Proton donor; for dehydratase activity. Residues 1522-1547 (SCGGGGGSTNNTISNSSSSISSIDNG) are disordered. The segment covering 1530-1547 (TNNTISNSSSSISSIDNG) has biased composition (low complexity). Positions 1718-2053 (GIISDLKIKQ…SGNHIGKILI (336 aa)) are enoyl reductase (ER) domain. A ketoreductase (KR) domain region spans residues 2083-2277 (TYIFTGFGGL…LKSSCIHLAS (195 aa)). The tract at residues 2379–2400 (GDGSFDDLNQLEDEGQQGFGNG) is disordered. One can recognise a Carrier domain in the interval 2421–2498 (FDNDFYTKSI…STVELIKNKL (78 aa)). Residue S2458 is modified to O-(pantetheine 4'-phosphoryl)serine. Positions 2568-2589 (SSSSNNSNSKNELTSPPPSAKR) are disordered. The tract at residues 2707 to 2968 (ISHVVGVTST…IEAILFKLIK (262 aa)) is chalcone synthase. C2747 is a catalytic residue.

Pantetheine 4'-phosphate is required as a cofactor.

The catalysed reaction is (E)-4-coumaroyl-CoA + 3 malonyl-CoA + 3 H(+) = 2',4,4',6'-tetrahydroxychalcone + 3 CO2 + 4 CoA. It carries out the reaction hexanoyl-CoA + 3 malonyl-CoA + 3 H(+) = 2,4,6-trihydroxyphenylhexan-1-one + 3 CO2 + 4 CoA. It participates in secondary metabolite biosynthesis; flavonoid biosynthesis. Its function is as follows. Polyketide synthase; part of the gene cluster that mediates the biosynthesis of DIF-1 (Differentiation Inducing Factor-1), a signal molecule involved in the differentiation of pstO (prestalk-O) cells. The three-step process begins with the formation of (2,4,6-trihydroxyphenyl)-1-hexan-1-one (THPH) by the polyketide synthase StlB. THPH is then dichlorinated by the flavin-dependent halogenase ChlA. The last step of DIF-1 biosynthesis is the O-methylation of dichloro-THPH (or des-methyl-DIF-1) by the methyltransferase DmtA to yield DIF-1. The protein is Polyketide synthase 37 (StlB) of Dictyostelium discoideum (Social amoeba).